The chain runs to 280 residues: Orotidine 5'-phosphate decarboxylase (280 aa).

The active-site Proton donor is the K96.

The protein belongs to the OMP decarboxylase family. Type 2 subfamily.

It carries out the reaction orotidine 5'-phosphate + H(+) = UMP + CO2. It participates in pyrimidine metabolism; UMP biosynthesis via de novo pathway; UMP from orotate: step 2/2. The chain is Orotidine 5'-phosphate decarboxylase from Parabacteroides distasonis (strain ATCC 8503 / DSM 20701 / CIP 104284 / JCM 5825 / NCTC 11152).